Reading from the N-terminus, the 107-residue chain is Chlorobenzene dioxygenase, ferredoxin component (107 aa).

The Rieske domain occupies 4–99; it reads TYIMRQSDLP…IKVEGGDVHV (96 aa). The [2Fe-2S] cluster site is built by Cys-43, His-45, Cys-62, and His-65.

This sequence belongs to the bacterial ring-hydroxylating dioxygenase ferredoxin component family. As to quaternary structure, this dioxygenase system consists of four proteins: the two subunits of the oxygenase component (TecA1 and TecA2), a ferredoxin (TecA3) and a ferredoxin reductase (TecA4). [2Fe-2S] cluster serves as cofactor.

It participates in aromatic compound metabolism. In terms of biological role, part of the chlorobenzene dioxygenase system that catalyzes the dihydroxylation of a range of aromatic compounds, including chlorinated benzenes and toluenes, and dinuclear aromatics such as biphenyl and dibenzo-p-dioxin. The protein is Chlorobenzene dioxygenase, ferredoxin component of Cupriavidus sp. (strain PS12).